The chain runs to 493 residues: Guanosine-5'-triphosphate,3'-diphosphate pyrophosphatase (493 aa).

This sequence belongs to the GppA/Ppx family. GppA subfamily.

It catalyses the reaction guanosine 3'-diphosphate 5'-triphosphate + H2O = guanosine 3',5'-bis(diphosphate) + phosphate + H(+). Its pathway is purine metabolism; ppGpp biosynthesis; ppGpp from GTP: step 2/2. In terms of biological role, catalyzes the conversion of pppGpp to ppGpp. Guanosine pentaphosphate (pppGpp) is a cytoplasmic signaling molecule which together with ppGpp controls the 'stringent response', an adaptive process that allows bacteria to respond to amino acid starvation, resulting in the coordinated regulation of numerous cellular activities. The polypeptide is Guanosine-5'-triphosphate,3'-diphosphate pyrophosphatase (Salmonella dublin (strain CT_02021853)).